Here is a 67-residue protein sequence, read N- to C-terminus: Small ribosomal subunit protein eS27 (67 aa).

Zn(2+)-binding residues include Cys22, Cys25, Cys41, and Cys44. The C4-type zinc-finger motif lies at 22-44 (CPDCGNEQITFSHAAMVVRCLVC).

This sequence belongs to the eukaryotic ribosomal protein eS27 family. Part of the 30S ribosomal subunit. Requires Zn(2+) as cofactor.

The polypeptide is Small ribosomal subunit protein eS27 (Pyrobaculum aerophilum (strain ATCC 51768 / DSM 7523 / JCM 9630 / CIP 104966 / NBRC 100827 / IM2)).